Reading from the N-terminus, the 873-residue chain is Kinase suppressor of Ras 1 (873 aa).

Disordered regions lie at residues 1 to 24 (MDRA…GAAA), 174 to 230 (EHKM…PGLS), and 251 to 281 (LHSF…PSRK). The mediates association with membranes stretch occupies residues 1–170 (MDRAALRAAA…ALTCLRKVTG (170 aa)). Residues 206–216 (ASTQGPRSISV) are compositionally biased toward polar residues. A phosphothreonine mark is found at T256 and T260. Position 297 is a phosphoserine; by MARK3 (S297). S320 carries the phosphoserine modification. The Phorbol-ester/DAG-type zinc finger occupies 333 to 377 (THRFSTKSWLSQVCNVCQKSMIFGVKCKHCRLKCHNKCTKEAPAC). Residue H334 coordinates Zn(2+). The residue at position 337 (S337) is a Phosphoserine. Residues C346, C349, C359, C362, H367, C370, and C377 each contribute to the Zn(2+) site. S392 is subject to Phosphoserine; by MARK3. Phosphothreonine is present on T411. Disordered regions lie at residues 416 to 473 (LTKK…RFSF) and 506 to 544 (HEAE…PISR). A compositionally biased stretch (low complexity) spans 429 to 458 (SSSNPSSTTSSTPSSPAPFLTSSNPSSATT). Residues 506–519 (HEAEAEEPEAGKSE) are compositionally biased toward basic and acidic residues. S518 bears the Phosphoserine mark. Residues 520 to 530 (AEDDEEDEVDD) show a composition bias toward acidic residues. A Protein kinase domain is found at 563–833 (VELGEPIGQG…MDMLERLPKL (271 aa)). 569 to 577 (IGQGRWGRV) provides a ligand contact to ATP. D683 functions as the Proton acceptor in the catalytic mechanism. ATP contacts are provided by K685 and D700. S838 bears the Phosphoserine mark.

This sequence belongs to the protein kinase superfamily. TKL Ser/Thr protein kinase family. Homodimer. Heterodimerizes (via N-terminus) with BRAF (via N-terminus) in a MAP2K1/MEK1 or MAP2K2/MEK2-dependent manner. Interacts with MAP2K1/MEK1 and MAP2K2/MEK2. Binding to MAP2K1/MEK1 releases the intramolecular inhibitory interaction between KSR1 N-terminus and kinase domains which is required for the subsequent RSK1 dimerization with BRAF. Identified in a complex with AKAP13, MAP2K1 and BRAF. Interacts with AKAP13 and BRAF. Interacts with RAF and MAPK/ERK, in a Ras-dependent manner. Interacts with 14-3-3 proteins including YWHAB. Interacts with HSP90AA1/HSP90, YWHAE/14-3-3 and CDC37. The binding of 14-3-3 proteins to phosphorylated KSR1 prevents the membrane localization. Interacts with MARK3/C-TAK1. Interacts with PPP2R1A and PPP2CA. Interacts with VRK2. In terms of processing, phosphorylated on Ser-297 and, to a higher extent, on Ser-392 by MARK3. Dephosphorylated on Ser-392 by PPP2CA. Phosphorylated KSR1 is cytoplasmic and dephosphorylated KSR1 is membrane-associated. Phosphorylated by PKA at Ser-838. Phosphorylation at Ser-838 is required for cAMP-dependent activation of MAPK1 and/or MAPK3. In terms of tissue distribution, expressed in brain, spleen and testis. Isoform 1 is highly expressed spleen and weakly in testis, and isoform 2 is highly expressed in brain and weakly in testis.

It is found in the cytoplasm. It localises to the membrane. The protein resides in the cell membrane. The protein localises to the cell projection. Its subcellular location is the ruffle membrane. It is found in the endoplasmic reticulum membrane. The catalysed reaction is L-seryl-[protein] + ATP = O-phospho-L-seryl-[protein] + ADP + H(+). It carries out the reaction L-threonyl-[protein] + ATP = O-phospho-L-threonyl-[protein] + ADP + H(+). In terms of biological role, part of a multiprotein signaling complex which promotes phosphorylation of Raf family members and activation of downstream MAP kinases. Independently of its kinase activity, acts as MAP2K1/MEK1 and MAP2K2/MEK2-dependent allosteric activator of BRAF; upon binding to MAP2K1/MEK1 or MAP2K2/MEK2, dimerizes with BRAF and promotes BRAF-mediated phosphorylation of MAP2K1/MEK1 and/or MAP2K2/MEK2. Promotes activation of MAPK1 and/or MAPK3, both in response to EGF and to cAMP. Its kinase activity is unsure. Some protein kinase activity has been detected in vitro, however the physiological relevance of this activity is unknown. The protein is Kinase suppressor of Ras 1 (Ksr1) of Mus musculus (Mouse).